A 396-amino-acid chain; its full sequence is Putative nickel insertion protein (396 aa).

This sequence belongs to the LarC family.

This chain is Putative nickel insertion protein, found in Methanococcoides burtonii (strain DSM 6242 / NBRC 107633 / OCM 468 / ACE-M).